The following is a 547-amino-acid chain: CTP synthase (547 aa).

Positions 1–265 (MARYVFITGG…DQAVLDAFGI (265 aa)) are amidoligase domain. Residue serine 13 coordinates CTP. Serine 13 provides a ligand contact to UTP. ATP-binding positions include 14 to 19 (SLGKGL) and aspartate 71. Residues aspartate 71 and glutamate 139 each coordinate Mg(2+). Residues 146-148 (DIE), 186-191 (KTKPTQ), and lysine 222 each bind CTP. UTP contacts are provided by residues 186-191 (KTKPTQ) and lysine 222. In terms of domain architecture, Glutamine amidotransferase type-1 spans 291 to 546 (RVAIVGKYTQ…VRAAVEVSRL (256 aa)). L-glutamine is bound at residue glycine 353. Catalysis depends on cysteine 380, which acts as the Nucleophile; for glutamine hydrolysis. L-glutamine contacts are provided by residues 381-384 (LGMQ), glutamate 404, and arginine 474. Catalysis depends on residues histidine 519 and glutamate 521.

Belongs to the CTP synthase family. Homotetramer.

The catalysed reaction is UTP + L-glutamine + ATP + H2O = CTP + L-glutamate + ADP + phosphate + 2 H(+). The enzyme catalyses L-glutamine + H2O = L-glutamate + NH4(+). It catalyses the reaction UTP + NH4(+) + ATP = CTP + ADP + phosphate + 2 H(+). Its pathway is pyrimidine metabolism; CTP biosynthesis via de novo pathway; CTP from UDP: step 2/2. With respect to regulation, allosterically activated by GTP, when glutamine is the substrate; GTP has no effect on the reaction when ammonia is the substrate. The allosteric effector GTP functions by stabilizing the protein conformation that binds the tetrahedral intermediate(s) formed during glutamine hydrolysis. Inhibited by the product CTP, via allosteric rather than competitive inhibition. Catalyzes the ATP-dependent amination of UTP to CTP with either L-glutamine or ammonia as the source of nitrogen. Regulates intracellular CTP levels through interactions with the four ribonucleotide triphosphates. This chain is CTP synthase, found in Cereibacter sphaeroides (strain ATCC 17029 / ATH 2.4.9) (Rhodobacter sphaeroides).